Reading from the N-terminus, the 287-residue chain is Nucleotide-binding protein Dtpsy_0831 (287 aa).

Position 10 to 17 (10 to 17) interacts with ATP; the sequence is GMSGSGKS. 59–62 contacts GTP; it reads DVRS.

It belongs to the RapZ-like family.

Functionally, displays ATPase and GTPase activities. The chain is Nucleotide-binding protein Dtpsy_0831 from Acidovorax ebreus (strain TPSY) (Diaphorobacter sp. (strain TPSY)).